An 82-amino-acid polypeptide reads, in one-letter code: ATP synthase subunit c (82 aa).

2 helical membrane passes run 6–26 and 49–69; these read LGLT…GCGI and IMVT…YALV.

This sequence belongs to the ATPase C chain family. In terms of assembly, F-type ATPases have 2 components, F(1) - the catalytic core - and F(0) - the membrane proton channel. F(1) has five subunits: alpha(3), beta(3), gamma(1), delta(1), epsilon(1). F(0) has three main subunits: a(1), b(2) and c(10-14). The alpha and beta chains form an alternating ring which encloses part of the gamma chain. F(1) is attached to F(0) by a central stalk formed by the gamma and epsilon chains, while a peripheral stalk is formed by the delta and b chains.

The protein resides in the cell inner membrane. F(1)F(0) ATP synthase produces ATP from ADP in the presence of a proton or sodium gradient. F-type ATPases consist of two structural domains, F(1) containing the extramembraneous catalytic core and F(0) containing the membrane proton channel, linked together by a central stalk and a peripheral stalk. During catalysis, ATP synthesis in the catalytic domain of F(1) is coupled via a rotary mechanism of the central stalk subunits to proton translocation. In terms of biological role, key component of the F(0) channel; it plays a direct role in translocation across the membrane. A homomeric c-ring of between 10-14 subunits forms the central stalk rotor element with the F(1) delta and epsilon subunits. This is ATP synthase subunit c from Nitratidesulfovibrio vulgaris (strain ATCC 29579 / DSM 644 / CCUG 34227 / NCIMB 8303 / VKM B-1760 / Hildenborough) (Desulfovibrio vulgaris).